We begin with the raw amino-acid sequence, 72 residues long: Translation initiation factor IF-1 (72 aa).

The 72-residue stretch at 1–72 (MSKEDVIEVE…TRGRITWRAK (72 aa)) folds into the S1-like domain.

This sequence belongs to the IF-1 family. As to quaternary structure, component of the 30S ribosomal translation pre-initiation complex which assembles on the 30S ribosome in the order IF-2 and IF-3, IF-1 and N-formylmethionyl-tRNA(fMet); mRNA recruitment can occur at any time during PIC assembly.

It is found in the cytoplasm. In terms of biological role, one of the essential components for the initiation of protein synthesis. Stabilizes the binding of IF-2 and IF-3 on the 30S subunit to which N-formylmethionyl-tRNA(fMet) subsequently binds. Helps modulate mRNA selection, yielding the 30S pre-initiation complex (PIC). Upon addition of the 50S ribosomal subunit IF-1, IF-2 and IF-3 are released leaving the mature 70S translation initiation complex. The polypeptide is Translation initiation factor IF-1 (Acetivibrio thermocellus (strain ATCC 27405 / DSM 1237 / JCM 9322 / NBRC 103400 / NCIMB 10682 / NRRL B-4536 / VPI 7372) (Clostridium thermocellum)).